The sequence spans 77 residues: Defensin-like protein 4 (77 aa).

A signal peptide spans 1-30; it reads MKFSMRLISAVLFLVMIFVATGMGPVTVEA. 4 disulfide bridges follow: cysteine 33–cysteine 77, cysteine 44–cysteine 64, cysteine 50–cysteine 71, and cysteine 54–cysteine 73.

The protein belongs to the DEFL family. Expressed in roots, siliques and seeds.

It is found in the secreted. Its function is as follows. Confers broad-spectrum resistance to pathogens. This Arabidopsis thaliana (Mouse-ear cress) protein is Defensin-like protein 4 (PDF2.1).